A 187-amino-acid polypeptide reads, in one-letter code: Plasmodium-specific hydrophobic abundant protein (187 aa).

The signal sequence occupies residues 1–18 (MMKYVFVALCLFAVVALA).

To HAP-S protein.

It localises to the membrane. In Physarum polycephalum (Slime mold), this protein is Plasmodium-specific hydrophobic abundant protein.